The chain runs to 399 residues: Yellow-related salivary protein M10 (399 aa).

An N-terminal signal peptide occupies residues 1–18; that stretch reads MKFILSVLALASFQHVFC. N-linked (GlcNAc...) asparagine glycans are attached at residues asparagine 29 and asparagine 83.

This sequence belongs to the major royal jelly protein family. As to expression, salivary gland (at protein level).

The protein resides in the secreted. In terms of biological role, probably modulates blood feeding of sand flies on vertebrate species by binding and sequestering different mediators involved in the host response. Functions as a chemoattractant for host neutrophils; likely acts through a G-protein-coupled receptor and effect is dependent on calcium influx and phosphatidylinositol 3-kinases (PI3K) activity. (Microbial infection) Probably enhances infection caused by Leishmania species in the host through augmentation of host neutrophil recruitment into the skin. This is Yellow-related salivary protein M10 from Phlebotomus duboscqi (Sandfly).